Consider the following 79-residue polypeptide: Small ribosomal subunit protein bS21 (79 aa).

2 stretches are compositionally biased toward basic residues: residues 47-59 and 69-79; these read RKQAAAVKRHLKK and GVGHRRKKSTT. The interval 47-79 is disordered; it reads RKQAAAVKRHLKKISRDVSSRRGVGHRRKKSTT.

It belongs to the bacterial ribosomal protein bS21 family.

In Legionella pneumophila (strain Paris), this protein is Small ribosomal subunit protein bS21.